The primary structure comprises 772 residues: 5-methyltetrahydropteroyltriglutamate--homocysteine methyltransferase (772 aa).

Residues 24–27 (RELK) and K120 each bind 5-methyltetrahydropteroyltri-L-glutamate. The segment at 404–428 (DPAVRSRTAATTDADARRSGPYPER) is disordered. L-homocysteine contacts are provided by residues 446–448 (IGS) and E499. Residues 446–448 (IGS) and E499 each bind L-methionine. W576 contributes to the 5-methyltetrahydropteroyltri-L-glutamate binding site. D614 is a binding site for L-homocysteine. D614 provides a ligand contact to L-methionine. Residue E620 coordinates 5-methyltetrahydropteroyltri-L-glutamate. Zn(2+) is bound by residues H656, C658, and E680. H709 serves as the catalytic Proton donor. C741 is a binding site for Zn(2+).

This sequence belongs to the vitamin-B12 independent methionine synthase family. Requires Zn(2+) as cofactor.

It catalyses the reaction 5-methyltetrahydropteroyltri-L-glutamate + L-homocysteine = tetrahydropteroyltri-L-glutamate + L-methionine. Its pathway is amino-acid biosynthesis; L-methionine biosynthesis via de novo pathway; L-methionine from L-homocysteine (MetE route): step 1/1. Its function is as follows. Catalyzes the transfer of a methyl group from 5-methyltetrahydrofolate to homocysteine resulting in methionine formation. The chain is 5-methyltetrahydropteroyltriglutamate--homocysteine methyltransferase from Streptomyces avermitilis (strain ATCC 31267 / DSM 46492 / JCM 5070 / NBRC 14893 / NCIMB 12804 / NRRL 8165 / MA-4680).